Consider the following 135-residue polypeptide: uncharacterized protein (135 aa).

4 consecutive transmembrane segments (helical) span residues 4-24 (IIIC…WIFG), 26-46 (WDMP…TGVI), 68-88 (LILV…NGAW), and 93-113 (LIAY…CAAL).

It belongs to the bacteriophage holin family. Cp-1 holin subfamily.

Its subcellular location is the cell membrane. This is an uncharacterized protein from Clostridium perfringens (strain 13 / Type A).